Reading from the N-terminus, the 583-residue chain is CD166 antigen (583 aa).

The signal sequence occupies residues 1–27 (MESKGASSCRLLFCLLISATVFRPGLG). Ig-like V-type domains follow at residues 28-120 (WYTV…TEDN) and 125-234 (PTIV…KTIH). At 28 to 527 (WYTVNSAYGD…NREKVNDQAK (500 aa)) the chain is on the extracellular side. 2 disulfides stabilise this stretch: C43–C113 and C157–C220. N91, N95, N167, N265, N306, N361, N457, N480, and N499 each carry an N-linked (GlcNAc...) asparagine glycan. 3 Ig-like C2-type domains span residues 245 to 328 (PTEQ…TAIT), 333 to 409 (DLSL…ESLT), and 416 to 501 (PQIK…LNVS). Intrachain disulfides connect C270/C313, C354/C392, and C435/C485. A helical transmembrane segment spans residues 528–549 (LIVGIVVGLLLAALVAGVVYWL). Residues 550–583 (YMKKSKTASKHVNKDLGNMEENKKLEENNHKTEA) are Cytoplasmic-facing. Positions 562–583 (NKDLGNMEENKKLEENNHKTEA) are disordered. Residues 569-583 (EENKKLEENNHKTEA) show a composition bias toward basic and acidic residues.

Homodimer. Interacts (via extracellular domain) with CD6 (via extracellular domain). Homodimerization and interaction with CD6 involve the same region and cannot occur simultaneously. The affinity for CD6 is much higher than the affinity for self-association. Interacts (via glycosylated extracellular domain) with LGALS1 and LGALS3. Interaction with LGALS1 or LGALS3 inhibits interaction with CD6. Glycosylated. As to expression, detected on hematopoietic stem cells derived from umbilical cord blood. Detected on lymph vessel endothelial cells, skin and tonsil. Detected on peripheral blood monocytes. Detected on monocyte-derived dendritic cells (at protein level). Detected at low levels in spleen, placenta, liver. Expressed by activated T-cells, B-cells, monocytes and thymic epithelial cells. Isoform 1 and isoform 3 are detected in vein and artery endothelial cells, astrocytes, keratinocytes and artery smooth muscle cells. Expressed by neurons in the brain. Restricted expression in tumor cell lines. Detected in highly metastasizing melanoma cell lines.

It is found in the cell membrane. The protein resides in the cell projection. It localises to the axon. The protein localises to the dendrite. Its subcellular location is the secreted. Functionally, cell adhesion molecule that mediates both heterotypic cell-cell contacts via its interaction with CD6, as well as homotypic cell-cell contacts. Promotes T-cell activation and proliferation via its interactions with CD6. Contributes to the formation and maturation of the immunological synapse via its interactions with CD6. Mediates homotypic interactions with cells that express ALCAM. Acts as a ligand for the LILRB4 receptor, enhancing LILRB4-mediated inhibition of T cell proliferation. Required for normal hematopoietic stem cell engraftment in the bone marrow. Mediates attachment of dendritic cells onto endothelial cells via homotypic interaction. Inhibits endothelial cell migration and promotes endothelial tube formation via homotypic interactions. Required for normal organization of the lymph vessel network. Required for normal hematopoietic stem cell engraftment in the bone marrow. Plays a role in hematopoiesis; required for normal numbers of hematopoietic stem cells in bone marrow. Promotes in vitro osteoblast proliferation and differentiation. Promotes neurite extension, axon growth and axon guidance; axons grow preferentially on surfaces that contain ALCAM. Mediates outgrowth and pathfinding for retinal ganglion cell axons. Its function is as follows. Inhibits activities of membrane-bound isoforms by competing for the same interaction partners. Inhibits cell attachment via homotypic interactions. Promotes endothelial cell migration. Inhibits endothelial cell tube formation. The chain is CD166 antigen (ALCAM) from Homo sapiens (Human).